The following is a 675-amino-acid chain: G-protein-signaling modulator 1 (675 aa).

The interval 1–509 is mediates association with membranes; that stretch reads MAGPAPPVAD…DLLTKFQSSR (509 aa). TPR repeat units lie at residues 28 to 61, 66 to 99, 106 to 139, 146 to 181, 183 to 202, 209 to 242, 249 to 282, 289 to 322, and 329 to 362; these read CLELALEGERLCKAGDFKTGVAFFEAAVQVGTED, SAIYSQLGNAYFYLKEHGRALEYHKHDLLLARTI, AKASGNLGNTLKVLGRFDEAAVCCQRHLSIAQEQ, ARALYNIGNVYHAKGKQLSWNAANATQDPGHLPPDV, ETLCKASEFYERNLSLVKEL, GRAYGNLGNTHYLLGNFTEATTFHKERLAIAKEF, RRAYSNLGNAHVFLGRFDVAAEYYKKTLQLSRQL, AQACYSLGNTYTLLQDYERAAEYHLRHLLIAQEL, and GRACWSLGNAYVSMGRPAQALTFAKKHLQISQEI. The interaction with STK11/LKB1 stretch occupies residues 364–487; that stretch reads DRHGELTARM…VRVHVPRTSI (124 aa). A disordered region spans residues 391–412; the sequence is SEKPDLAGYEAQGARPKRTQRL. The residue at position 413 (Ser413) is a Phosphoserine. An Omega-N-methylarginine modification is found at Arg421. A compositionally biased stretch (basic and acidic residues) spans 424–442; sequence LEREQNGDSHHSGDWRGPS. The segment at 424–492 is disordered; it reads LEREQNGDSH…PRTSIPRAPS (69 aa). A phosphoserine mark is found at Ser445, Ser469, Ser471, Ser492, and Ser493. Residues 454-469 are compositionally biased toward basic and acidic residues; it reads KYQEGPDAERRPREGS. A GoLoco 1 domain is found at 495-517; the sequence is EECFFDLLTKFQSSRMDDQRCPL. Residues Ser545 and Ser569 each carry the phosphoserine modification. GoLoco domains lie at 548 to 570, 596 to 618, and 630 to 652; these read TEEFFDLIASSQSRRLDDQRASV, GDDFFNMLIKYQSSRIDDQRCPP, and DEDFFSLIQRVQAKRMDEQRVDL. Disordered stretches follow at residues 610 to 630 and 644 to 675; these read RIDDQRCPPPDVLPRGPTMPD and RMDEQRVDLAGGPEQGAGGPPEPQQQCQPGAS.

It belongs to the GPSM family. As to quaternary structure, interacts with GNAI1, GNAI2 and GNAI3 preferentially in their GDP-bound state. May also interact with GNAO1. Interacts with STK11/LKB1 and MACF1. Interacts with INSC/inscuteable and FRMPD1. In terms of processing, phosphorylation regulates interaction with G(i/o) alpha. In terms of tissue distribution, expressed in intestinal cells.

Its subcellular location is the cytoplasm. It is found in the cytosol. The protein resides in the endoplasmic reticulum membrane. It localises to the golgi apparatus membrane. The protein localises to the cell membrane. In terms of biological role, guanine nucleotide dissociation inhibitor (GDI) which functions as a receptor-independent activator of heterotrimeric G-protein signaling. Keeps G(i/o) alpha subunit in its GDP-bound form thus uncoupling heterotrimeric G-proteins signaling from G protein-coupled receptors. Controls spindle orientation and asymmetric cell fate of cerebral cortical progenitors. May also be involved in macroautophagy in intestinal cells. May play a role in drug addiction. The protein is G-protein-signaling modulator 1 (GPSM1) of Homo sapiens (Human).